The sequence spans 800 residues: MLISYKWLKELVDIDVPSQELAEKMSTTGIEVEGVESPAAGLSKIVVGEVLSCEDVPETHLHVCQVNVGEEERQIVCGAPNVRAGIKVMVALPGARIADNYKIKKGKIRGLESLGMICSLGELGISDSVVPKEFADGIQILPEDAVPGEEVFSYLDLDDEIIELSITPNRADALSMCGVAHEVAAIYDKAVNFKEFTLTETNEAAADALSVSIETDKAPYYAARILDNVTIAPSPQWLQNLLMNEGIRPINNVVDVTNYILLYFGQPMHAFDLDNFEGTDIRVREARAGEKLVTLDGEERDLDVNDLVITVADKPVALAGVMGGQATEISEKSSRVVLEAAVFNGKSIRKTSGRLNLRSESSSRFEKGINVATVNEALDAAASLIAELAGATVRKGIVSAGELDTSDVEVSSTLADVNRVLGTELSYADVEDVFRRLGFGLSGNADSFTVRVPRRRWDITIEADLFEEIARIYGYDRLPTSLPKDDGTAGELTATQKLRRQVRTIAEGAGLTEIITYTLTTPEKAVEFTAQPSNLTELMWPMTVDRSVLRQNMISGILDTVAYNVARKNKNLALYEIGKVFEQTGNPKEELPNEINSFAFALTGLVAEKDFQTAAVPVDFFYAKGILEALFTRLGLQVTYTATSEIASLHPGRTAVISLGDQVLGFLGQVHPVTAKAYDIPETYVAELNLSAIEAALQPATPFVEITKFPAVSRDVALLLKAEVTHQEVVDAIQAAGVKRLTDIKLFDVFSGEKLGLGMKSMAYSLTFQNPEDSLTDEEVARYMEKIQASLEEKVNAEVR.

One can recognise a tRNA-binding domain in the interval 39-152 (AAGLSKIVVG…EDAVPGEEVF (114 aa)). The 76-residue stretch at 405–480 (TSDVEVSSTL…RIYGYDRLPT (76 aa)) folds into the B5 domain. Residues aspartate 458, aspartate 464, glutamate 467, and glutamate 468 each contribute to the Mg(2+) site. In terms of domain architecture, FDX-ACB spans 707 to 800 (TKFPAVSRDV…LEEKVNAEVR (94 aa)).

Belongs to the phenylalanyl-tRNA synthetase beta subunit family. Type 1 subfamily. In terms of assembly, tetramer of two alpha and two beta subunits. Requires Mg(2+) as cofactor.

The protein resides in the cytoplasm. It catalyses the reaction tRNA(Phe) + L-phenylalanine + ATP = L-phenylalanyl-tRNA(Phe) + AMP + diphosphate + H(+). The chain is Phenylalanine--tRNA ligase beta subunit from Streptococcus pneumoniae (strain ATCC BAA-255 / R6).